Consider the following 211-residue polypeptide: ATP phosphoribosyltransferase (211 aa).

This sequence belongs to the ATP phosphoribosyltransferase family. Short subfamily. As to quaternary structure, heteromultimer composed of HisG and HisZ subunits.

It is found in the cytoplasm. The catalysed reaction is 1-(5-phospho-beta-D-ribosyl)-ATP + diphosphate = 5-phospho-alpha-D-ribose 1-diphosphate + ATP. It participates in amino-acid biosynthesis; L-histidine biosynthesis; L-histidine from 5-phospho-alpha-D-ribose 1-diphosphate: step 1/9. Its function is as follows. Catalyzes the condensation of ATP and 5-phosphoribose 1-diphosphate to form N'-(5'-phosphoribosyl)-ATP (PR-ATP). Has a crucial role in the pathway because the rate of histidine biosynthesis seems to be controlled primarily by regulation of HisG enzymatic activity. This chain is ATP phosphoribosyltransferase, found in Pseudomonas entomophila (strain L48).